Reading from the N-terminus, the 232-residue chain is Ribonuclease 3 (232 aa).

In terms of domain architecture, RNase III spans 5–134 (QTVLKNHFAI…FLGALLLDKD (130 aa)). Glutamate 47 lines the Mg(2+) pocket. The active site involves aspartate 51. Mg(2+) is bound by residues aspartate 120 and glutamate 123. Residue glutamate 123 is part of the active site. Positions 160 to 229 (DYKTHLQELL…AKNAVEKGLD (70 aa)) constitute a DRBM domain.

Belongs to the ribonuclease III family. Homodimer. Mg(2+) serves as cofactor.

It localises to the cytoplasm. The enzyme catalyses Endonucleolytic cleavage to 5'-phosphomonoester.. In terms of biological role, digests double-stranded RNA. Involved in the processing of primary rRNA transcript to yield the immediate precursors to the large and small rRNAs (23S and 16S). Processes some mRNAs, and tRNAs when they are encoded in the rRNA operon. Processes pre-crRNA and tracrRNA of type II CRISPR loci if present in the organism. This chain is Ribonuclease 3, found in Streptococcus pneumoniae (strain Hungary19A-6).